The sequence spans 461 residues: Glutamyl-tRNA reductase (461 aa).

Residues 50–53 (TCNR), serine 111, 116–118 (EPQ), and glutamine 122 contribute to the substrate site. The active-site Nucleophile is cysteine 51. Position 191–196 (191–196 (GAGEMA)) interacts with NADP(+).

This sequence belongs to the glutamyl-tRNA reductase family. As to quaternary structure, homodimer.

The enzyme catalyses (S)-4-amino-5-oxopentanoate + tRNA(Glu) + NADP(+) = L-glutamyl-tRNA(Glu) + NADPH + H(+). It participates in porphyrin-containing compound metabolism; protoporphyrin-IX biosynthesis; 5-aminolevulinate from L-glutamyl-tRNA(Glu): step 1/2. Catalyzes the NADPH-dependent reduction of glutamyl-tRNA(Glu) to glutamate 1-semialdehyde (GSA). This is Glutamyl-tRNA reductase from Syntrophobacter fumaroxidans (strain DSM 10017 / MPOB).